The chain runs to 113 residues: Large ribosomal subunit protein eL31 (113 aa).

Belongs to the eukaryotic ribosomal protein eL31 family. As to quaternary structure, component of the large ribosomal subunit (LSU). Mature yeast ribosomes consist of a small (40S) and a large (60S) subunit. The 40S small subunit contains 1 molecule of ribosomal RNA (18S rRNA) and at least 33 different proteins. The large 60S subunit contains 3 rRNA molecules (25S, 5.8S and 5S rRNA) and at least 46 different proteins.

The protein resides in the cytoplasm. Functionally, component of the ribosome, a large ribonucleoprotein complex responsible for the synthesis of proteins in the cell. The small ribosomal subunit (SSU) binds messenger RNAs (mRNAs) and translates the encoded message by selecting cognate aminoacyl-transfer RNA (tRNA) molecules. The large subunit (LSU) contains the ribosomal catalytic site termed the peptidyl transferase center (PTC), which catalyzes the formation of peptide bonds, thereby polymerizing the amino acids delivered by tRNAs into a polypeptide chain. The nascent polypeptides leave the ribosome through a tunnel in the LSU and interact with protein factors that function in enzymatic processing, targeting, and the membrane insertion of nascent chains at the exit of the ribosomal tunnel. The sequence is that of Large ribosomal subunit protein eL31 (rpl31) from Schizosaccharomyces pombe (strain 972 / ATCC 24843) (Fission yeast).